The primary structure comprises 346 residues: PhoH-like protein (346 aa).

142–149 lines the ATP pocket; sequence GPAGTGKT.

This sequence belongs to the PhoH family.

The protein resides in the cytoplasm. The protein is PhoH-like protein (ybeZ) of Escherichia coli O157:H7.